Here is a 188-residue protein sequence, read N- to C-terminus: Achaete-scute homolog 5 (188 aa).

The interval 80–93 is basic motif; that stretch reads AFIQKRNERERQRV. A bHLH domain is found at 80 to 132; sequence AFIQKRNERERQRVKCVNEGYARLRGHLPGALTEKRLSKVETLRAAIRYIKYL. Residues 94–132 form a helix-loop-helix motif region; sequence KCVNEGYARLRGHLPGALTEKRLSKVETLRAAIRYIKYL. Residues 139 to 188 form a disordered region; the sequence is TPDGAPPPATSPPPAHTGHSNVPQPSSLVAESSGSPFSSSPFLESEEPSL. Residues 142 to 153 show a composition bias toward pro residues; sequence GAPPPATSPPPA. Over residues 158-168 the composition is skewed to polar residues; sequence SNVPQPSSLVA. Over residues 169–181 the composition is skewed to low complexity; it reads ESSGSPFSSSPFL.

In terms of assembly, interacts with transcription factor TCF3/E12. In terms of tissue distribution, expressed in teeth (at protein level).

The protein resides in the nucleus. In terms of biological role, transcription factor. Probably binds E-box motifs 5'-CANNTG-3' in complex with transcription factor TCF3/E12. Negatively modulates transcription of target genes such as CDH1/E-cadherin, perhaps by recruiting the PRC2 repressive complex to regulatory elements. Regulates ameloblast development and tooth germ growth, perhaps acting by positively modulating migration of inner enamel epithelium (IEE) cells. Plays a role in enamel formation. The sequence is that of Achaete-scute homolog 5 from Mus musculus (Mouse).